The following is a 468-amino-acid chain: 6-phospho-beta-galactosidase (468 aa).

Gln19, His116, Asn159, Glu160, and Asn297 together coordinate D-galactose 6-phosphate. Glu160 functions as the Proton donor in the catalytic mechanism. Glu375 functions as the Nucleophile in the catalytic mechanism. The D-galactose 6-phosphate site is built by Ser428, Trp429, Lys435, and Tyr437.

The protein belongs to the glycosyl hydrolase 1 family.

It catalyses the reaction a 6-phospho-beta-D-galactoside + H2O = D-galactose 6-phosphate + an alcohol. It participates in carbohydrate metabolism; lactose degradation; D-galactose 6-phosphate and beta-D-glucose from lactose 6-phosphate: step 1/1. This is 6-phospho-beta-galactosidase from Lactococcus lactis subsp. lactis (Streptococcus lactis).